We begin with the raw amino-acid sequence, 629 residues long: Chaperone protein HtpG (629 aa).

The a; substrate-binding stretch occupies residues 1-335 (MSEVETSVEK…TADLPLNVSR (335 aa)). Positions 336-551 (EMIQESPLLA…EQGPDRQLQK (216 aa)) are b. Residues 552 to 629 (MLQDAGRIEG…SRVFGRALKE (78 aa)) are c.

The protein belongs to the heat shock protein 90 family. As to quaternary structure, homodimer.

The protein resides in the cytoplasm. Molecular chaperone. Has ATPase activity. This is Chaperone protein HtpG from Rhizobium meliloti (strain 1021) (Ensifer meliloti).